Reading from the N-terminus, the 306-residue chain is tRNA dimethylallyltransferase (306 aa).

12-19 provides a ligand contact to ATP; that stretch reads GPTASGKT. Residue 14 to 19 coordinates substrate; sequence TASGKT. Interaction with substrate tRNA stretches follow at residues 37–40, 161–165, and 242–247; these read DSAL, QRLSR, and RCVGYR.

The protein belongs to the IPP transferase family. In terms of assembly, monomer. The cofactor is Mg(2+).

The enzyme catalyses adenosine(37) in tRNA + dimethylallyl diphosphate = N(6)-dimethylallyladenosine(37) in tRNA + diphosphate. Functionally, catalyzes the transfer of a dimethylallyl group onto the adenine at position 37 in tRNAs that read codons beginning with uridine, leading to the formation of N6-(dimethylallyl)adenosine (i(6)A). The chain is tRNA dimethylallyltransferase from Shewanella amazonensis (strain ATCC BAA-1098 / SB2B).